A 334-amino-acid polypeptide reads, in one-letter code: Phospho-N-acetylmuramoyl-pentapeptide-transferase (334 aa).

The next 10 helical transmembrane spans lie at 11–31 (GAGL…IPLM), 55–75 (PTMG…IFAP), 84–104 (LIIA…DDYI), 124–144 (VGLA…GTAV), 158–178 (PLYY…VNFA), 184–204 (LLGG…ALAL), 205–225 (GQTD…GFLH), 233–253 (IFMG…LAVL), 258–278 (FLLV…ILQV), and 311–331 (LFWG…PGML).

This sequence belongs to the glycosyltransferase 4 family. MraY subfamily. Requires Mg(2+) as cofactor.

It localises to the cell membrane. The catalysed reaction is UDP-N-acetyl-alpha-D-muramoyl-L-alanyl-gamma-D-glutamyl-meso-2,6-diaminopimeloyl-D-alanyl-D-alanine + di-trans,octa-cis-undecaprenyl phosphate = di-trans,octa-cis-undecaprenyl diphospho-N-acetyl-alpha-D-muramoyl-L-alanyl-D-glutamyl-meso-2,6-diaminopimeloyl-D-alanyl-D-alanine + UMP. Its pathway is cell wall biogenesis; peptidoglycan biosynthesis. Functionally, catalyzes the initial step of the lipid cycle reactions in the biosynthesis of the cell wall peptidoglycan: transfers peptidoglycan precursor phospho-MurNAc-pentapeptide from UDP-MurNAc-pentapeptide onto the lipid carrier undecaprenyl phosphate, yielding undecaprenyl-pyrophosphoryl-MurNAc-pentapeptide, known as lipid I. The chain is Phospho-N-acetylmuramoyl-pentapeptide-transferase from Symbiobacterium thermophilum (strain DSM 24528 / JCM 14929 / IAM 14863 / T).